A 343-amino-acid chain; its full sequence is Malate dehydrogenase, peroxisomal (343 aa).

Residues 8 to 14 (GASGGVG) and Asp-34 contribute to the NAD(+) site. Positions 80 and 86 each coordinate substrate. NAD(+)-binding positions include Asn-93 and 116–118 (ISN). 2 residues coordinate substrate: Asn-118 and Arg-152. The active-site Proton acceptor is His-187. Met-237 is an NAD(+) binding site.

This sequence belongs to the LDH/MDH superfamily. MDH type 1 family. As to quaternary structure, homodimer.

The protein resides in the peroxisome. The catalysed reaction is (S)-malate + NAD(+) = oxaloacetate + NADH + H(+). The sequence is that of Malate dehydrogenase, peroxisomal (MDH3) from Saccharomyces cerevisiae (strain ATCC 204508 / S288c) (Baker's yeast).